The sequence spans 292 residues: NAD kinase (292 aa).

Asp73 (proton acceptor) is an active-site residue. Residues 73 to 74 (DG), 147 to 148 (NE), His158, Arg175, Asp177, 188 to 193 (TAYSLS), and Gln247 contribute to the NAD(+) site.

This sequence belongs to the NAD kinase family. It depends on a divalent metal cation as a cofactor.

It localises to the cytoplasm. It carries out the reaction NAD(+) + ATP = ADP + NADP(+) + H(+). Functionally, involved in the regulation of the intracellular balance of NAD and NADP, and is a key enzyme in the biosynthesis of NADP. Catalyzes specifically the phosphorylation on 2'-hydroxyl of the adenosine moiety of NAD to yield NADP. The chain is NAD kinase from Shigella boydii serotype 18 (strain CDC 3083-94 / BS512).